Consider the following 78-residue polypeptide: UPF0270 protein YE3952 (78 aa).

It belongs to the UPF0270 family.

The sequence is that of UPF0270 protein YE3952 from Yersinia enterocolitica serotype O:8 / biotype 1B (strain NCTC 13174 / 8081).